Reading from the N-terminus, the 449-residue chain is CBL-interacting protein kinase 31 (449 aa).

The region spanning 20–275 (YELGRTIGEG…ISQILEDPWF (256 aa)) is the Protein kinase domain. ATP is bound by residues 26–34 (IGEGTFAKV) and lysine 49. Aspartate 143 acts as the Proton acceptor in catalysis. The interval 161–190 (DFGLSALTEQVKADGLLHTTCGTPNYVAPE) is activation loop. In terms of domain architecture, NAF spans 313 to 337 (DQPTSMNAFELISLNQALNLDNLFE).

Belongs to the protein kinase superfamily. CAMK Ser/Thr protein kinase family. SNF1 subfamily. May interact with CBL3. Requires Mn(2+) as cofactor. Post-translationally, autophosphorylated. In terms of tissue distribution, highly expressed in leaf blade and leaf sheath, but not in other tissues.

The catalysed reaction is L-seryl-[protein] + ATP = O-phospho-L-seryl-[protein] + ADP + H(+). It catalyses the reaction L-threonyl-[protein] + ATP = O-phospho-L-threonyl-[protein] + ADP + H(+). In terms of biological role, involved in cold stress tolerance. CIPK serine-threonine protein kinases interact with CBL proteins. Binding of a CBL protein to the regulatory NAF domain of CIPK protein lead to the activation of the kinase in a calcium-dependent manner. In Oryza sativa subsp. japonica (Rice), this protein is CBL-interacting protein kinase 31 (CIPK31).